A 171-amino-acid polypeptide reads, in one-letter code: Phosphinothricin N-acetyltransferase (171 aa).

The region spanning 7 to 171 (VQVRPGVEED…WDVAWYERPL (165 aa)) is the N-acetyltransferase domain. Residues 94 to 96 (VYV), 102 to 107 (GRGIGS), and Asn133 each bind acetyl-CoA.

This sequence belongs to the acetyltransferase family. PAT/BAR subfamily.

The enzyme catalyses phosphinothricin + acetyl-CoA = N-acetylphosphinothricin + CoA + H(+). Its function is as follows. Inactivates phosphinothricin (PPT) by transfer of an acetyl group from acetyl CoA. The physiological substrate could be a structurally related compound. This Streptomyces coelicolor (strain ATCC BAA-471 / A3(2) / M145) protein is Phosphinothricin N-acetyltransferase.